The primary structure comprises 760 residues: Probable ubiquitin carboxyl-terminal hydrolase creB (760 aa).

The segment at 1–28 (MGSFLRSFRNNAGSTTPSVGAVPAKKEV) is disordered. The segment covering 8–18 (FRNNAGSTTPS) has biased composition (polar residues). The 415-residue stretch at 55–469 (YGMENYGNTC…CAYVLFYQET (415 aa)) folds into the USP domain. The active-site Nucleophile is Cys-64. 2 disordered regions span residues 114–146 (AEAQ…DSPD) and 242–270 (PAAI…KTPN). Over residues 258-270 (VDQSASSGSKTPN) the composition is skewed to polar residues. His-420 acts as the Proton acceptor in catalysis. Residues 520–760 (EEHNRPNGLK…LRKKSFSILS (241 aa)) form a disordered region. Positions 575–635 (KSDVQGKKER…AALEASKASK (61 aa)) form a coiled coil. Basic and acidic residues-rich tracts occupy residues 578-626 (VQGK…ELKA), 635-651 (KAQE…KDKL), and 708-742 (DPKD…ERTG). Over residues 743-760 (HGKWRSFSLRKKSFSILS) the composition is skewed to basic residues.

It belongs to the peptidase C19 family. As to quaternary structure, interacts with creA, creC and qutD.

It carries out the reaction Thiol-dependent hydrolysis of ester, thioester, amide, peptide and isopeptide bonds formed by the C-terminal Gly of ubiquitin (a 76-residue protein attached to proteins as an intracellular targeting signal).. Its function is as follows. Ubiquitin thioesterase component of the regulatory network controlling carbon source utilization through ubiquitination and deubiquitination involving creA, creB, creC, creD and acrB. Deubiquitinates the creA catabolic repressor and the quinate permease qutD. Also plays a role in response to carbon starvation and the control of extracellular proteases activity. The protein is Probable ubiquitin carboxyl-terminal hydrolase creB (creB) of Aspergillus clavatus (strain ATCC 1007 / CBS 513.65 / DSM 816 / NCTC 3887 / NRRL 1 / QM 1276 / 107).